The following is a 429-amino-acid chain: UDP-N-acetylglucosamine 1-carboxyvinyltransferase (429 aa).

Phosphoenolpyruvate is bound at residue 22 to 23; it reads KN. Residue R102 participates in UDP-N-acetyl-alpha-D-glucosamine binding. C126 serves as the catalytic Proton donor. Residue C126 is modified to 2-(S-cysteinyl)pyruvic acid O-phosphothioketal. UDP-N-acetyl-alpha-D-glucosamine-binding positions include 131-135, D316, and I338; that span reads RPVDL.

Belongs to the EPSP synthase family. MurA subfamily.

The protein resides in the cytoplasm. The catalysed reaction is phosphoenolpyruvate + UDP-N-acetyl-alpha-D-glucosamine = UDP-N-acetyl-3-O-(1-carboxyvinyl)-alpha-D-glucosamine + phosphate. The protein operates within cell wall biogenesis; peptidoglycan biosynthesis. Its function is as follows. Cell wall formation. Adds enolpyruvyl to UDP-N-acetylglucosamine. The chain is UDP-N-acetylglucosamine 1-carboxyvinyltransferase from Methylobacterium radiotolerans (strain ATCC 27329 / DSM 1819 / JCM 2831 / NBRC 15690 / NCIMB 10815 / 0-1).